The primary structure comprises 326 residues: Ficolin-1 (326 aa).

The N-terminal stretch at 1 to 29 (MELSGATMARGLAVLLVLFLHIKNLPAQA) is a signal peptide. A Collagen-like domain is found at 55 to 93 (GLPGAPGPKGEAGVIGERGERGLPGAPGKAGPVGPKGDR). The tract at residues 72–111 (RGERGLPGAPGKAGPVGPKGDRGEKGMRGEKGDAGQSQSC) is disordered. Positions 77 to 89 (LPGAPGKAGPVGP) are enriched in low complexity. The span at 90 to 104 (KGDRGEKGMRGEKGD) shows a compositional bias: basic and acidic residues. A Fibrinogen C-terminal domain is found at 109–326 (QSCATGPRNC…KVSEMKVRPA (218 aa)). Disulfide bonds link Cys111–Cys139 and Cys118–Cys146. The segment at 115 to 154 (PRNCKDLLDRGYFLSGWHTIYLPDCRPLTVLCDMDTDGGG) is a domain; contributes to trimerization. A b domain; contributes to trimerization region spans residues 155–243 (WTVFQRRMDG…LVLGAFVGGS (89 aa)). Asp262, Asp264, Ser266, and Ser268 together coordinate Ca(2+). Cys270 and Cys283 are oxidised to a cystine. Position 282 to 284 (282 to 284 (DCH)) interacts with a carbohydrate. Residue Asn305 is glycosylated (N-linked (GlcNAc...) asparagine). A p domain region spans residues 317-326 (KVSEMKVRPA).

It belongs to the ficolin lectin family. Homotrimer. Interacts with elastin/ELN. Interacts (via Fibrinogen C-terminal domain) with FFAR2. Interacts with CRP; may regulate monocyte activation by FCN1. As to expression, peripheral blood leukocytes, monocytes and granulocytes. Also detected in spleen, lung, and thymus, may be due to the presence of tissue macrophages or trapped blood in these tissues. Not detected on lymphocytes.

It is found in the secreted. The protein localises to the cell membrane. Extracellular lectin functioning as a pattern-recognition receptor in innate immunity. Binds the sugar moieties of pathogen-associated molecular patterns (PAMPs) displayed on microbes and activates the lectin pathway of the complement system. May also activate monocytes through a G protein-coupled receptor, FFAR2, inducing the secretion of interleukin-8/IL-8. Binds preferentially to 9-O-acetylated 2-6-linked sialic acid derivatives and to various glycans containing sialic acid engaged in a 2-3 linkage. This Homo sapiens (Human) protein is Ficolin-1 (FCN1).